The chain runs to 438 residues: Glycerol-3-phosphate acyltransferase 3 (438 aa).

Residues Trp14–Ile34 traverse the membrane as a helical segment. 2 positions are modified to phosphoserine: Ser68 and Ser77. A run of 2 helical transmembrane segments spans residues Ile137 to Leu157 and Val161 to Leu181. The HXXXXD motif signature appears at His229–Asp234.

It belongs to the 1-acyl-sn-glycerol-3-phosphate acyltransferase family. Most abundant in epididymal fat, followed by small intestine, brown adipose tissue, kidney, heart and colon.

It is found in the endoplasmic reticulum membrane. The enzyme catalyses sn-glycerol 3-phosphate + an acyl-CoA = a 1-acyl-sn-glycero-3-phosphate + CoA. It catalyses the reaction a 1-acyl-sn-glycero-3-phosphate + an acyl-CoA = a 1,2-diacyl-sn-glycero-3-phosphate + CoA. It carries out the reaction dodecanoyl-CoA + sn-glycerol 3-phosphate = 1-dodecanoyl-sn-glycerol 3-phosphate + CoA. The catalysed reaction is sn-glycerol 3-phosphate + hexadecanoyl-CoA = 1-hexadecanoyl-sn-glycero-3-phosphate + CoA. The enzyme catalyses sn-glycerol 3-phosphate + (9Z)-octadecenoyl-CoA = 1-(9Z-octadecenoyl)-sn-glycero-3-phosphate + CoA. It catalyses the reaction (9Z,12Z)-octadecadienoyl-CoA + sn-glycerol 3-phosphate = 1-(9Z,12Z)-octadecadienoyl-sn-glycero-3-phosphate + CoA. It carries out the reaction 1-tetradecanoyl-sn-glycerol 3-phosphate + (9Z)-octadecenoyl-CoA = 1-tetradecanoyl-2-(9Z)-octadecenoyl-sn-glycero-3-phosphate + CoA. The catalysed reaction is 1-hexadecanoyl-sn-glycero-3-phosphate + (9Z)-octadecenoyl-CoA = 1-hexadecanoyl-2-(9Z-octadecenoyl)-sn-glycero-3-phosphate + CoA. The enzyme catalyses 1-(9Z-octadecenoyl)-sn-glycero-3-phosphate + (9Z)-octadecenoyl-CoA = 1,2-di-(9Z-octadecenoyl)-sn-glycero-3-phosphate + CoA. It catalyses the reaction 1-(6Z,9Z,12Z-octadecatrienoyl)-sn-glycero-3-phosphate + (9Z)-octadecenoyl-CoA = (6Z,9Z,12Z)-octadecatrienoyl-2-(9Z)-octadecenoyl-sn-glycero-3-phosphate + CoA. It carries out the reaction 1-(9Z,12Z,15Z)-octadecatrienoyl-sn-glycero-3-phosphate + (9Z)-octadecenoyl-CoA = 1-(9Z,12Z,15Z)-octadecatrienoyl-2-(9Z)-octadecenoyl-sn-glycero-3-phosphate + CoA. The catalysed reaction is 1-(9Z-octadecenoyl)-sn-glycero-3-phosphate + tetradecanoyl-CoA = 1-(9Z)-octadecenoyl-2-tetradecanoyl-sn-glycero-3-phosphate + CoA. The enzyme catalyses 1-(9Z-octadecenoyl)-sn-glycero-3-phosphate + hexadecanoyl-CoA = 1-(9Z)-octadecenoyl-2-hexadecanoyl-sn-glycero-3-phosphate + CoA. It catalyses the reaction 1-(9Z-octadecenoyl)-sn-glycero-3-phosphate + octadecanoyl-CoA = 1-(9Z-octadecenoyl)-2-octadecanoyl-sn-glycero-3-phosphate + CoA. It carries out the reaction 1-(9Z-octadecenoyl)-sn-glycero-3-phosphate + (9Z,12Z)-octadecadienoyl-CoA = 1-(9Z)-octadecenoyl-2-(9Z,12Z)-octadecadienoyl-sn-glycero-3-phosphate + CoA. The catalysed reaction is 1-(5Z,8Z,11Z,14Z-eicosatetraenoyl)-sn-glycero-3-phosphate + (9Z)-octadecenoyl-CoA = 1-(5Z,8Z,11Z,14Z)-eicosatetraenoyl-2-(9Z)-octadecenoyl-sn-glycero-3-phosphate + CoA. It functions in the pathway glycerolipid metabolism; triacylglycerol biosynthesis. The protein operates within phospholipid metabolism; CDP-diacylglycerol biosynthesis; CDP-diacylglycerol from sn-glycerol 3-phosphate: step 1/3. In terms of biological role, converts glycerol-3-phosphate to 1-acyl-sn-glycerol-3-phosphate (lysophosphatidic acid or LPA) by incorporating an acyl moiety at the sn-1 position of the glycerol backbone. Also converts LPA into 1,2-diacyl-sn-glycerol-3-phosphate (phosphatidic acid or PA) by incorporating an acyl moiety at the sn-2 position of the glycerol backbone. Protects cells against lipotoxicity. This Mus musculus (Mouse) protein is Glycerol-3-phosphate acyltransferase 3.